We begin with the raw amino-acid sequence, 310 residues long: Protein-L-isoaspartate O-methyltransferase (310 aa).

2 disordered regions span residues 1–42 (MSGE…AADK) and 64–90 (SAAA…APSV). A compositionally biased stretch (basic and acidic residues) spans 14 to 32 (EDLKRAPRKSEGRAGERHA). The segment covering 64 to 81 (SAAAKPATAPKPTALKPA) has biased composition (low complexity). The active site involves Ser157.

This sequence belongs to the methyltransferase superfamily. L-isoaspartyl/D-aspartyl protein methyltransferase family.

Its subcellular location is the cytoplasm. The catalysed reaction is [protein]-L-isoaspartate + S-adenosyl-L-methionine = [protein]-L-isoaspartate alpha-methyl ester + S-adenosyl-L-homocysteine. Its function is as follows. Catalyzes the methyl esterification of L-isoaspartyl residues in peptides and proteins that result from spontaneous decomposition of normal L-aspartyl and L-asparaginyl residues. It plays a role in the repair and/or degradation of damaged proteins. This Burkholderia lata (strain ATCC 17760 / DSM 23089 / LMG 22485 / NCIMB 9086 / R18194 / 383) protein is Protein-L-isoaspartate O-methyltransferase.